The chain runs to 730 residues: Elongation factor 2 (730 aa).

The tr-type G domain maps to 19–228; it reads TKIRNIGIVA…TGVSFKDVYD (210 aa). Residues 28-35, 94-98, and 148-151 contribute to the GTP site; these read AHIDHGKT, DTPGH, and NKVD. H596 carries the post-translational modification Diphthamide.

This sequence belongs to the TRAFAC class translation factor GTPase superfamily. Classic translation factor GTPase family. EF-G/EF-2 subfamily.

The protein resides in the cytoplasm. Its function is as follows. Catalyzes the GTP-dependent ribosomal translocation step during translation elongation. During this step, the ribosome changes from the pre-translocational (PRE) to the post-translocational (POST) state as the newly formed A-site-bound peptidyl-tRNA and P-site-bound deacylated tRNA move to the P and E sites, respectively. Catalyzes the coordinated movement of the two tRNA molecules, the mRNA and conformational changes in the ribosome. This Methanosarcina barkeri (strain Fusaro / DSM 804) protein is Elongation factor 2.